The primary structure comprises 262 residues: Hydroxyethylthiazole kinase (262 aa).

Methionine 50 contributes to the substrate binding site. Arginine 125 and threonine 171 together coordinate ATP. Residue glycine 198 coordinates substrate.

Belongs to the Thz kinase family. Mg(2+) is required as a cofactor.

It catalyses the reaction 5-(2-hydroxyethyl)-4-methylthiazole + ATP = 4-methyl-5-(2-phosphooxyethyl)-thiazole + ADP + H(+). It participates in cofactor biosynthesis; thiamine diphosphate biosynthesis; 4-methyl-5-(2-phosphoethyl)-thiazole from 5-(2-hydroxyethyl)-4-methylthiazole: step 1/1. Catalyzes the phosphorylation of the hydroxyl group of 4-methyl-5-beta-hydroxyethylthiazole (THZ). The protein is Hydroxyethylthiazole kinase of Shigella flexneri serotype 5b (strain 8401).